The primary structure comprises 108 residues: UPF0060 membrane protein CKO_01576 (108 aa).

A run of 4 helical transmembrane segments spans residues 6-26 (LLFF…WLWL), 29-49 (GATA…VWLL), 61-81 (AAYG…VDGV), and 85-105 (LYDW…VAGW).

It belongs to the UPF0060 family.

It is found in the cell inner membrane. This is UPF0060 membrane protein CKO_01576 from Citrobacter koseri (strain ATCC BAA-895 / CDC 4225-83 / SGSC4696).